Reading from the N-terminus, the 252-residue chain is Flagellar L-ring protein (252 aa).

The first 25 residues, 1 to 25, serve as a signal peptide directing secretion; sequence MLKLASLNRIVLTGTLLAAAGLASG. A lipid anchor (N-palmitoyl cysteine) is attached at Cys26. Residue Cys26 is the site of S-diacylglycerol cysteine attachment.

Belongs to the FlgH family. As to quaternary structure, the basal body constitutes a major portion of the flagellar organelle and consists of four rings (L,P,S, and M) mounted on a central rod.

Its subcellular location is the cell outer membrane. It is found in the bacterial flagellum basal body. Its function is as follows. Assembles around the rod to form the L-ring and probably protects the motor/basal body from shearing forces during rotation. The chain is Flagellar L-ring protein from Nitrobacter winogradskyi (strain ATCC 25391 / DSM 10237 / CIP 104748 / NCIMB 11846 / Nb-255).